We begin with the raw amino-acid sequence, 197 residues long: Phosphoheptose isomerase (197 aa).

One can recognise an SIS domain in the interval 36 to 197 (MVNALLNEGK…IDSQLFGSEE (162 aa)). Position 51–53 (51–53 (NGG)) interacts with substrate. Zn(2+)-binding residues include His-60 and Glu-64. Substrate-binding positions include Glu-64, 93–94 (ND), 119–121 (STS), Ser-124, and Gln-174. Residues Gln-174 and His-182 each contribute to the Zn(2+) site.

It belongs to the SIS family. GmhA subfamily. In terms of assembly, homotetramer. The cofactor is Zn(2+).

It is found in the cytoplasm. The enzyme catalyses 2 D-sedoheptulose 7-phosphate = D-glycero-alpha-D-manno-heptose 7-phosphate + D-glycero-beta-D-manno-heptose 7-phosphate. The protein operates within carbohydrate biosynthesis; D-glycero-D-manno-heptose 7-phosphate biosynthesis; D-glycero-alpha-D-manno-heptose 7-phosphate and D-glycero-beta-D-manno-heptose 7-phosphate from sedoheptulose 7-phosphate: step 1/1. Functionally, catalyzes the isomerization of sedoheptulose 7-phosphate in D-glycero-D-manno-heptose 7-phosphate. This Pseudomonas syringae pv. syringae (strain B728a) protein is Phosphoheptose isomerase.